Here is a 265-residue protein sequence, read N- to C-terminus: 3-methyl-2-oxobutanoate hydroxymethyltransferase (265 aa).

2 residues coordinate Mg(2+): Asp45 and Asp84. 3-methyl-2-oxobutanoate contacts are provided by residues 45 to 46 (DS), Asp84, and Lys112. Glu114 is a Mg(2+) binding site. Glu181 functions as the Proton acceptor in the catalytic mechanism.

The protein belongs to the PanB family. Homodecamer; pentamer of dimers. The cofactor is Mg(2+).

It localises to the cytoplasm. The catalysed reaction is 3-methyl-2-oxobutanoate + (6R)-5,10-methylene-5,6,7,8-tetrahydrofolate + H2O = 2-dehydropantoate + (6S)-5,6,7,8-tetrahydrofolate. It participates in cofactor biosynthesis; (R)-pantothenate biosynthesis; (R)-pantoate from 3-methyl-2-oxobutanoate: step 1/2. In terms of biological role, catalyzes the reversible reaction in which hydroxymethyl group from 5,10-methylenetetrahydrofolate is transferred onto alpha-ketoisovalerate to form ketopantoate. This chain is 3-methyl-2-oxobutanoate hydroxymethyltransferase, found in Yersinia enterocolitica serotype O:8 / biotype 1B (strain NCTC 13174 / 8081).